The chain runs to 785 residues: Probably inactive leucine-rich repeat receptor-like protein kinase At5g58150 (785 aa).

An N-terminal signal peptide occupies residues 1-21 (MRLSLWGSLLFFSFFVKHLTS). The Extracellular segment spans residues 22 to 436 (LDPNTDAYHL…KVNKKNTGLK (415 aa)). LRR repeat units follow at residues 64-88 (SENV…TIGK), 89-112 (MSKL…LWSL), 114-136 (LLES…IGNF), 138-160 (SLHT…ISNL), 161-184 (VNLT…LVHC), 186-208 (SLLS…FGSA), 210-232 (PLLK…VLHE), 236-258 (TVDL…HKHN), 259-283 (WSSL…LSSA), 284-306 (HKLG…EIGK), 307-330 (LSAL…EISR), 331-355 (LSHL…SVKN), 357-377 (EVLD…LLEK), and 379-405 (AMMQ…TIQR). The N-linked (GlcNAc...) asparagine glycan is linked to asparagine 119. N-linked (GlcNAc...) asparagine glycosylation is found at asparagine 162, asparagine 198, asparagine 216, and asparagine 258. N-linked (GlcNAc...) asparagine glycans are attached at residues asparagine 314, asparagine 319, and asparagine 343. Asparagine 385, asparagine 390, and asparagine 397 each carry an N-linked (GlcNAc...) asparagine glycan. A helical transmembrane segment spans residues 437–457 (IGLGLAISMAFLLIGLLLILV). Residues 458–785 (ALRVRRKSRT…GLLKDISPNY (328 aa)) lie on the Cytoplasmic side of the membrane. Phosphothreonine occurs at positions 510 and 518. A Protein kinase domain is found at 521-785 (FDRGTMLWEG…GLLKDISPNY (265 aa)). Residues 527-535 (LWEGKSGPT) and lysine 549 contribute to the ATP site. Tyrosine 594 and tyrosine 683 each carry phosphotyrosine.

It belongs to the protein kinase superfamily. Ser/Thr protein kinase family.

The protein resides in the cell membrane. This is Probably inactive leucine-rich repeat receptor-like protein kinase At5g58150 from Arabidopsis thaliana (Mouse-ear cress).